Consider the following 191-residue polypeptide: Cell division protein SepF (191 aa).

Residues 1 to 77 (MEGQDDYQLL…MGSNVIGLPG (77 aa)) are disordered.

Belongs to the SepF family. As to quaternary structure, homodimer. Interacts with FtsZ.

It is found in the cytoplasm. Its function is as follows. Cell division protein that is part of the divisome complex and is recruited early to the Z-ring. Probably stimulates Z-ring formation, perhaps through the cross-linking of FtsZ protofilaments. Its function overlaps with FtsA. The protein is Cell division protein SepF of Synechococcus sp. (strain JA-2-3B'a(2-13)) (Cyanobacteria bacterium Yellowstone B-Prime).